Consider the following 210-residue polypeptide: Na(+)-translocating NADH-quinone reductase subunit D (210 aa).

A run of 6 helical transmembrane segments spans residues 14 to 34 (PIVN…ALAV), 42 to 62 (LVMA…ISMI), 72 to 92 (IIVQ…LLQA), 103 to 123 (VFVG…AYAM), 131 to 151 (FMDG…VGFV), and 178 to 198 (NGLL…IWII).

It belongs to the NqrDE/RnfAE family. In terms of assembly, composed of six subunits; NqrA, NqrB, NqrC, NqrD, NqrE and NqrF.

It is found in the cell inner membrane. It catalyses the reaction a ubiquinone + n Na(+)(in) + NADH + H(+) = a ubiquinol + n Na(+)(out) + NAD(+). Functionally, NQR complex catalyzes the reduction of ubiquinone-1 to ubiquinol by two successive reactions, coupled with the transport of Na(+) ions from the cytoplasm to the periplasm. NqrA to NqrE are probably involved in the second step, the conversion of ubisemiquinone to ubiquinol. This is Na(+)-translocating NADH-quinone reductase subunit D from Shewanella sp. (strain ANA-3).